The sequence spans 1240 residues: ATP-dependent helicase/nuclease subunit A (1240 aa).

One can recognise a UvrD-like helicase ATP-binding domain in the interval Ser-12 to Arg-485. ATP is bound at residue Ala-33–Thr-40. The region spanning Lys-497–Gly-804 is the UvrD-like helicase C-terminal domain.

This sequence belongs to the helicase family. AddA subfamily. Heterodimer of AddA and AddB/RexB. Requires Mg(2+) as cofactor.

The catalysed reaction is Couples ATP hydrolysis with the unwinding of duplex DNA by translocating in the 3'-5' direction.. It carries out the reaction ATP + H2O = ADP + phosphate + H(+). Functionally, the heterodimer acts as both an ATP-dependent DNA helicase and an ATP-dependent, dual-direction single-stranded exonuclease. Recognizes the chi site generating a DNA molecule suitable for the initiation of homologous recombination. The AddA nuclease domain is required for chi fragment generation; this subunit has the helicase and 3' -&gt; 5' nuclease activities. In Bacillus cereus (strain AH820), this protein is ATP-dependent helicase/nuclease subunit A.